Consider the following 97-residue polypeptide: UPF0213 protein BLi00048/BL00536 (97 aa).

Positions 4-79 constitute a GIY-YIG domain; that stretch reads NSHYFYVLSC…KKLSRKNKER (76 aa).

This sequence belongs to the UPF0213 family.

In Bacillus licheniformis (strain ATCC 14580 / DSM 13 / JCM 2505 / CCUG 7422 / NBRC 12200 / NCIMB 9375 / NCTC 10341 / NRRL NRS-1264 / Gibson 46), this protein is UPF0213 protein BLi00048/BL00536.